Consider the following 381-residue polypeptide: Cytochrome b (381 aa).

A run of 4 helical transmembrane segments spans residues 34–54 (FGSHLGLCLIIQILTGLFLAM), 78–99 (WLIRNIHANGASLFFICVYLHI), 114–134 (WNIGVILLFLLMATAFVGYVL), and 179–199 (FFAFHFLLPFLILALTVIHLL). Heme b contacts are provided by His84 and His98. Residues His183 and His197 each contribute to the heme b site. A ubiquinone is bound at residue His202. Transmembrane regions (helical) follow at residues 227-247 (YKDLLGFFVMIFFLAALALFM), 289-309 (LGGVLALLFSIFILMLVPLLH), 321-341 (MTQILFWFLVANSIILTWIGG), and 348-368 (FIMVGQIASISYFSLFLIIMP).

This sequence belongs to the cytochrome b family. The cytochrome bc1 complex contains 3 respiratory subunits (MT-CYB, CYC1 and UQCRFS1), 2 core proteins (UQCRC1 and UQCRC2) and probably 6 low-molecular weight proteins. Heme b is required as a cofactor.

Its subcellular location is the mitochondrion inner membrane. Component of the ubiquinol-cytochrome c reductase complex (complex III or cytochrome b-c1 complex) that is part of the mitochondrial respiratory chain. The b-c1 complex mediates electron transfer from ubiquinol to cytochrome c. Contributes to the generation of a proton gradient across the mitochondrial membrane that is then used for ATP synthesis. In Carcharhinus porosus (Smalltail shark), this protein is Cytochrome b (mt-cyb).